The chain runs to 78 residues: Large ribosomal subunit protein eL20 (78 aa).

This sequence belongs to the eukaryotic ribosomal protein eL20 family. In terms of assembly, part of the 50S ribosomal subunit. Binds 23S rRNA.

The sequence is that of Large ribosomal subunit protein eL20 from Pyrobaculum calidifontis (strain DSM 21063 / JCM 11548 / VA1).